We begin with the raw amino-acid sequence, 119 residues long: uncharacterized protein (119 aa).

The tract at residues 78-119 (SHRKSQQHQTQGNQVLRGTRKLESPTVGPRPGLRRQHTRNFL) is disordered. Positions 84–93 (QHQTQGNQVL) are enriched in polar residues. The span at 109 to 119 (GLRRQHTRNFL) shows a compositional bias: basic residues.

This is an uncharacterized protein from Saccharomyces cerevisiae (strain ATCC 204508 / S288c) (Baker's yeast).